The following is a 69-amino-acid chain: Mitotic-spindle organizing protein 1 (69 aa).

The protein belongs to the MOZART1 family. Part of the gamma-tubulin complex.

Its subcellular location is the cytoplasm. It localises to the cytoskeleton. The protein localises to the microtubule organizing center. The protein resides in the spindle. In terms of biological role, required for gamma-tubulin complex recruitment to the microtubule organizing centers (MTOCs). This Picea sitchensis (Sitka spruce) protein is Mitotic-spindle organizing protein 1.